Consider the following 74-residue polypeptide: Small ribosomal subunit protein bS18 (74 aa).

Belongs to the bacterial ribosomal protein bS18 family. Part of the 30S ribosomal subunit. Forms a tight heterodimer with protein bS6.

In terms of biological role, binds as a heterodimer with protein bS6 to the central domain of the 16S rRNA, where it helps stabilize the platform of the 30S subunit. The sequence is that of Small ribosomal subunit protein bS18 from Gloeobacter violaceus (strain ATCC 29082 / PCC 7421).